The primary structure comprises 283 residues: Bifunctional protein FolD (283 aa).

NADP(+) is bound by residues 164–166 (GRS), Ser189, and Ile230.

It belongs to the tetrahydrofolate dehydrogenase/cyclohydrolase family. In terms of assembly, homodimer.

It catalyses the reaction (6R)-5,10-methylene-5,6,7,8-tetrahydrofolate + NADP(+) = (6R)-5,10-methenyltetrahydrofolate + NADPH. The enzyme catalyses (6R)-5,10-methenyltetrahydrofolate + H2O = (6R)-10-formyltetrahydrofolate + H(+). It functions in the pathway one-carbon metabolism; tetrahydrofolate interconversion. Functionally, catalyzes the oxidation of 5,10-methylenetetrahydrofolate to 5,10-methenyltetrahydrofolate and then the hydrolysis of 5,10-methenyltetrahydrofolate to 10-formyltetrahydrofolate. The chain is Bifunctional protein FolD from Lactobacillus delbrueckii subsp. bulgaricus (strain ATCC 11842 / DSM 20081 / BCRC 10696 / JCM 1002 / NBRC 13953 / NCIMB 11778 / NCTC 12712 / WDCM 00102 / Lb 14).